The chain runs to 748 residues: CCR4-NOT transcription complex subunit 10-A (748 aa).

Residues 1 to 17 (MAADKAGEQGAEKHEDS) show a composition bias toward basic and acidic residues. Disordered regions lie at residues 1-25 (MAAD…GISD), 184-205 (SNNK…EPFA), 483-524 (KQEN…PPSS), and 605-635 (VSLG…QMPQ). Positions 185 to 200 (NNKNGKNNETNSNANN) are enriched in low complexity. Polar residues-rich tracts occupy residues 487–509 (GSKT…VCSN) and 605–615 (VSLGVSSNEQE).

The protein belongs to the CNOT10 family. As to quaternary structure, component of the CCR4-NOT complex. cnot10 and cnot11 form a subcomplex docked to the cnot1 scaffold.

The protein resides in the cytoplasm. It is found in the nucleus. Its function is as follows. Component of the CCR4-NOT complex which is one of the major cellular mRNA deadenylases and is linked to various cellular processes including bulk mRNA degradation, miRNA-mediated repression, translational repression during translational initiation and general transcription regulation. Additional complex functions may be a consequence of its influence on mRNA expression. Is not required for association of CNOT7 to the CCR4-NOT complex. This Xenopus laevis (African clawed frog) protein is CCR4-NOT transcription complex subunit 10-A (cnot10-a).